The sequence spans 1297 residues: Phosphoribosylformylglycinamidine synthase (1297 aa).

ATP is bound by residues 307 to 318 (GASTGSGGEIRD) and A678. Mg(2+) is bound by residues E718, N722, and D886. Residues 1044–1297 (MAILREQGVN…MFQNARKNLA (254 aa)) form the Glutamine amidotransferase type-1 domain. The active-site Nucleophile is C1137. Catalysis depends on residues H1262 and E1264.

In the N-terminal section; belongs to the FGAMS family. Monomer.

Its subcellular location is the cytoplasm. It catalyses the reaction N(2)-formyl-N(1)-(5-phospho-beta-D-ribosyl)glycinamide + L-glutamine + ATP + H2O = 2-formamido-N(1)-(5-O-phospho-beta-D-ribosyl)acetamidine + L-glutamate + ADP + phosphate + H(+). It functions in the pathway purine metabolism; IMP biosynthesis via de novo pathway; 5-amino-1-(5-phospho-D-ribosyl)imidazole from N(2)-formyl-N(1)-(5-phospho-D-ribosyl)glycinamide: step 1/2. Functionally, phosphoribosylformylglycinamidine synthase involved in the purines biosynthetic pathway. Catalyzes the ATP-dependent conversion of formylglycinamide ribonucleotide (FGAR) and glutamine to yield formylglycinamidine ribonucleotide (FGAM) and glutamate. This chain is Phosphoribosylformylglycinamidine synthase, found in Vibrio vulnificus (strain YJ016).